The sequence spans 394 residues: Bifunctional enzyme IspD/IspF (394 aa).

A 2-C-methyl-D-erythritol 4-phosphate cytidylyltransferase region spans residues 1-230; sequence MADTLAIVVA…AEALLGGGPV (230 aa). Residues 231–394 form a 2-C-methyl-D-erythritol 2,4-cyclodiphosphate synthase region; it reads LVGFGYDVHR…RIVLPGDRVL (164 aa). A divalent metal cation contacts are provided by Asp-237 and His-239. 4-CDP-2-C-methyl-D-erythritol 2-phosphate is bound by residues 237–239 and 263–264; these read DVH and HS. Residue His-271 coordinates a divalent metal cation. 4-CDP-2-C-methyl-D-erythritol 2-phosphate contacts are provided by residues 285 to 287, 290 to 294, 361 to 364, and Phe-368; these read DIG, FPDDD, and TTTE.

In the N-terminal section; belongs to the IspD/TarI cytidylyltransferase family. IspD subfamily. It in the C-terminal section; belongs to the IspF family. It depends on a divalent metal cation as a cofactor.

The catalysed reaction is 2-C-methyl-D-erythritol 4-phosphate + CTP + H(+) = 4-CDP-2-C-methyl-D-erythritol + diphosphate. It catalyses the reaction 4-CDP-2-C-methyl-D-erythritol 2-phosphate = 2-C-methyl-D-erythritol 2,4-cyclic diphosphate + CMP. The protein operates within isoprenoid biosynthesis; isopentenyl diphosphate biosynthesis via DXP pathway; isopentenyl diphosphate from 1-deoxy-D-xylulose 5-phosphate: step 2/6. It functions in the pathway isoprenoid biosynthesis; isopentenyl diphosphate biosynthesis via DXP pathway; isopentenyl diphosphate from 1-deoxy-D-xylulose 5-phosphate: step 4/6. In terms of biological role, bifunctional enzyme that catalyzes the formation of 4-diphosphocytidyl-2-C-methyl-D-erythritol from CTP and 2-C-methyl-D-erythritol 4-phosphate (MEP) (IspD), and catalyzes the conversion of 4-diphosphocytidyl-2-C-methyl-D-erythritol 2-phosphate (CDP-ME2P) to 2-C-methyl-D-erythritol 2,4-cyclodiphosphate (ME-CPP) with a corresponding release of cytidine 5-monophosphate (CMP) (IspF). This Desulforudis audaxviator (strain MP104C) protein is Bifunctional enzyme IspD/IspF.